A 287-amino-acid polypeptide reads, in one-letter code: Pantothenate synthetase (287 aa).

Met-30–His-37 provides a ligand contact to ATP. The active-site Proton donor is the His-37. Gln-61 is a binding site for (R)-pantoate. A beta-alanine-binding site is contributed by Gln-61. Gly-150–Asp-153 is a binding site for ATP. Gln-156 contacts (R)-pantoate. ATP contacts are provided by residues Val-179 and Leu-187 to Arg-190.

It belongs to the pantothenate synthetase family. In terms of assembly, homodimer.

The protein resides in the cytoplasm. It catalyses the reaction (R)-pantoate + beta-alanine + ATP = (R)-pantothenate + AMP + diphosphate + H(+). It participates in cofactor biosynthesis; (R)-pantothenate biosynthesis; (R)-pantothenate from (R)-pantoate and beta-alanine: step 1/1. Functionally, catalyzes the condensation of pantoate with beta-alanine in an ATP-dependent reaction via a pantoyl-adenylate intermediate. The chain is Pantothenate synthetase from Coprothermobacter proteolyticus (strain ATCC 35245 / DSM 5265 / OCM 4 / BT).